Reading from the N-terminus, the 1198-residue chain is Peroxisomal ATPase PEX6 (1198 aa).

Residue 879–886 (GPPGTGKT) participates in ATP binding.

The protein belongs to the AAA ATPase family. Interacts with PEX1; forming the PEX1-PEX6 AAA ATPase complex, which is composed of a heterohexamer formed by a trimer of PEX1-PEX6 dimers.

The protein resides in the cytoplasm. It localises to the cytosol. The protein localises to the peroxisome membrane. The catalysed reaction is ATP + H2O = ADP + phosphate + H(+). Functionally, component of the PEX1-PEX6 AAA ATPase complex, a protein dislocase complex that mediates the ATP-dependent extraction of the PEX5 receptor from peroxisomal membranes, an essential step for PEX5 recycling. Specifically recognizes PEX5 monoubiquitinated at 'Cys-6', and pulls it out of the peroxisome lumen through the PEX2-PEX10-PEX12 retrotranslocation channel. Extraction by the PEX1-PEX6 AAA ATPase complex is accompanied by unfolding of the TPR repeats and release of bound cargo from PEX5. The sequence is that of Peroxisomal ATPase PEX6 (PEX6) from Debaryomyces hansenii (strain ATCC 36239 / CBS 767 / BCRC 21394 / JCM 1990 / NBRC 0083 / IGC 2968) (Yeast).